A 134-amino-acid chain; its full sequence is Small ribosomal subunit protein bS6 (134 aa).

This sequence belongs to the bacterial ribosomal protein bS6 family.

In terms of biological role, binds together with bS18 to 16S ribosomal RNA. This is Small ribosomal subunit protein bS6 from Pelodictyon phaeoclathratiforme (strain DSM 5477 / BU-1).